Consider the following 209-residue polypeptide: UPF0174 protein jhp_1493 (209 aa).

The protein belongs to the UPF0174 family.

This is UPF0174 protein jhp_1493 from Helicobacter pylori (strain J99 / ATCC 700824) (Campylobacter pylori J99).